We begin with the raw amino-acid sequence, 319 residues long: Protease HtpX homolog (319 aa).

2 helical membrane-spanning segments follow: residues threonine 6–glycine 26 and glycine 28–serine 48. Position 130 (histidine 130) interacts with Zn(2+). Residue glutamate 131 is part of the active site. A Zn(2+)-binding site is contributed by histidine 134. Helical transmembrane passes span leucine 145–glycine 165 and proline 172–valine 192. Residue glutamate 201 coordinates Zn(2+). The tract at residues methionine 277–serine 319 is disordered.

Belongs to the peptidase M48B family. Requires Zn(2+) as cofactor.

The protein localises to the cell inner membrane. The protein is Protease HtpX homolog of Rhizobium meliloti (strain 1021) (Ensifer meliloti).